Here is an 802-residue protein sequence, read N- to C-terminus: Xylanase/beta-glucanase (802 aa).

The first 31 residues, 1 to 31 (MKKSIFKRYAAAVGLMASVLMFTAVPTTSNA), serve as a signal peptide directing secretion. One can recognise a GH11 domain in the interval 32–239 (ADDQKTGKVG…SNGSANVKSI (208 aa)). E124 (nucleophile) is an active-site residue. Catalysis depends on E226, which acts as the Proton donor. Residues 245–523 (IDIPDPEPIK…SYLEGHDPSK (279 aa)) are b. A CBM-cenC domain is found at 258 to 404 (NGYYLKENFE…YMDGAYAGVK (147 aa)). Disordered regions lie at residues 414 to 436 (SQSV…PSVT) and 533 to 564 (TTTT…YRDL). 2 stretches are compositionally biased toward low complexity: residues 419-436 (PPVT…PSVT) and 533-553 (TTTT…TTTT). Positions 434-513 (SVTKWGDANC…LIRAISELPE (80 aa)) constitute a Dockerin domain. Residues 524–555 (TTTTTTRITTTTTTTTTTTTSKTTTTTTTTSP) form a linker region. The GH16 domain maps to 556-792 (AMHGGYRDLG…WVTYNKNGVQ (237 aa)). E684 (nucleophile) is an active-site residue.

This sequence in the N-terminal section; belongs to the glycosyl hydrolase 11 (cellulase G) family. It in the C-terminal section; belongs to the glycosyl hydrolase 16 family.

The enzyme catalyses Endohydrolysis of (1-&gt;4)-beta-D-xylosidic linkages in xylans.. The catalysed reaction is Hydrolysis of (1-&gt;4)-beta-D-glucosidic linkages in beta-D-glucans containing (1-&gt;3)- and (1-&gt;4)-bonds.. Its pathway is glycan degradation; xylan degradation. In terms of biological role, contains two catalytic domains with xylanase and endo-beta-1,3-1,4 glucanase activities. The chain is Xylanase/beta-glucanase (xynD) from Ruminococcus flavefaciens.